A 431-amino-acid chain; its full sequence is tRNA(Ile)-lysidine synthase (431 aa).

Residue 19–24 (STGIDS) participates in ATP binding.

Belongs to the tRNA(Ile)-lysidine synthase family.

The protein localises to the cytoplasm. It carries out the reaction cytidine(34) in tRNA(Ile2) + L-lysine + ATP = lysidine(34) in tRNA(Ile2) + AMP + diphosphate + H(+). Functionally, ligates lysine onto the cytidine present at position 34 of the AUA codon-specific tRNA(Ile) that contains the anticodon CAU, in an ATP-dependent manner. Cytidine is converted to lysidine, thus changing the amino acid specificity of the tRNA from methionine to isoleucine. In Staphylococcus aureus (strain Mu50 / ATCC 700699), this protein is tRNA(Ile)-lysidine synthase.